Here is a 563-residue protein sequence, read N- to C-terminus: Membrane protein insertase YidC (563 aa).

Residues M1–L21 form a helical membrane-spanning segment. The disordered stretch occupies residues A43 to P62. 5 consecutive transmembrane segments (helical) span residues L344–L364, I370–F390, L440–L460, W471–M491, and P518–V538.

Belongs to the OXA1/ALB3/YidC family. Type 1 subfamily. In terms of assembly, interacts with the Sec translocase complex via SecD. Specifically interacts with transmembrane segments of nascent integral membrane proteins during membrane integration.

The protein resides in the cell inner membrane. Functionally, required for the insertion and/or proper folding and/or complex formation of integral membrane proteins into the membrane. Involved in integration of membrane proteins that insert both dependently and independently of the Sec translocase complex, as well as at least some lipoproteins. Aids folding of multispanning membrane proteins. The polypeptide is Membrane protein insertase YidC (Pseudomonas savastanoi pv. phaseolicola (strain 1448A / Race 6) (Pseudomonas syringae pv. phaseolicola (strain 1448A / Race 6))).